The following is a 447-amino-acid chain: MTTILKHLPVGQRIGIAFSGGLDTSAALLWMRQKGAVPYAYTANLGQPDEEDYDAIPRRAMEYGAENARLIDCRKQLVAEGIAAIQCGAFHNTTGGLTYFNTTPLGRAVTGTMLVAAMKEDGVNIWGDGSTYKGNDIERFYRYGLLTNAELQIYKPWLDTDFIDELGGRHEMSEFMIACGFDYKMSVEKAYSTDSNMLGATHEAKDLEYLNSSVKIVNPIMGVKFWDESVKIPAEEVTVRFEQGHPVALNGKTFSDDVEMMLEANRIGGRHGLGMSDQIENRIIEAKSRGIYEAPGMALLHIAYERLLTGIHNEDTIEQYHAHGRQLGRLLYQGRWFDSQALMLRDSLQRWVASQITGEVTLELRRGNDYSILNTVSENLTYKPERLTMEKGDSVFSPDDRIGQLTMRNLDITDTREKLFGYAKTGLLSSSATSGVPQVENLENKGQ.

Residues 17 to 25 (AFSGGLDTS) and A43 contribute to the ATP site. Y99 serves as a coordination point for L-citrulline. ATP contacts are provided by G129 and T131. L-aspartate contacts are provided by T131, N135, and D136. N135 is an L-citrulline binding site. Position 136 (D136) interacts with ATP. The L-citrulline site is built by R139 and S192. D194 serves as a coordination point for ATP. Positions 201, 203, and 280 each coordinate L-citrulline.

It belongs to the argininosuccinate synthase family. Type 2 subfamily. Homotetramer.

Its subcellular location is the cytoplasm. The catalysed reaction is L-citrulline + L-aspartate + ATP = 2-(N(omega)-L-arginino)succinate + AMP + diphosphate + H(+). The protein operates within amino-acid biosynthesis; L-arginine biosynthesis; L-arginine from L-ornithine and carbamoyl phosphate: step 2/3. The polypeptide is Argininosuccinate synthase (Escherichia coli O8 (strain IAI1)).